Consider the following 198-residue polypeptide: Recombination protein RecR (198 aa).

The segment at 58 to 73 adopts a C4-type zinc-finger fold; that stretch reads CLNCGNVGTSDICDIC. The Toprim domain maps to 81–175; the sequence is GELCVVEDVA…RLTSLAQGVP (95 aa).

Belongs to the RecR family.

In terms of biological role, may play a role in DNA repair. It seems to be involved in an RecBC-independent recombinational process of DNA repair. It may act with RecF and RecO. This chain is Recombination protein RecR, found in Ruegeria pomeroyi (strain ATCC 700808 / DSM 15171 / DSS-3) (Silicibacter pomeroyi).